The primary structure comprises 341 residues: Glyceraldehyde-3-phosphate dehydrogenase, cytosolic (341 aa).

Residues 14–15 and D36 contribute to the NAD(+) site; that span reads RI. Residues 153 to 155, T184, 213 to 214, and R236 contribute to the D-glyceraldehyde 3-phosphate site; these read SCT and TG. C154 functions as the Nucleophile in the catalytic mechanism. N318 is a binding site for NAD(+).

The protein belongs to the glyceraldehyde-3-phosphate dehydrogenase family. Homotetramer.

Its subcellular location is the cytoplasm. The catalysed reaction is D-glyceraldehyde 3-phosphate + phosphate + NAD(+) = (2R)-3-phospho-glyceroyl phosphate + NADH + H(+). It functions in the pathway carbohydrate degradation; glycolysis; pyruvate from D-glyceraldehyde 3-phosphate: step 1/5. In terms of biological role, key enzyme in glycolysis that catalyzes the first step of the pathway by converting D-glyceraldehyde 3-phosphate (G3P) into 3-phospho-D-glyceroyl phosphate. Essential for the maintenance of cellular ATP levels and carbohydrate metabolism. The protein is Glyceraldehyde-3-phosphate dehydrogenase, cytosolic (GAPC) of Chlamydomonas reinhardtii (Chlamydomonas smithii).